The chain runs to 171 residues: Crossover junction endodeoxyribonuclease RuvC (171 aa).

Residues Asp-7, Glu-66, and Asp-138 contribute to the active site. Mg(2+) contacts are provided by Asp-7, Glu-66, and Asp-138.

Belongs to the RuvC family. Homodimer which binds Holliday junction (HJ) DNA. The HJ becomes 2-fold symmetrical on binding to RuvC with unstacked arms; it has a different conformation from HJ DNA in complex with RuvA. In the full resolvosome a probable DNA-RuvA(4)-RuvB(12)-RuvC(2) complex forms which resolves the HJ. The cofactor is Mg(2+).

The protein resides in the cytoplasm. The enzyme catalyses Endonucleolytic cleavage at a junction such as a reciprocal single-stranded crossover between two homologous DNA duplexes (Holliday junction).. Its function is as follows. The RuvA-RuvB-RuvC complex processes Holliday junction (HJ) DNA during genetic recombination and DNA repair. Endonuclease that resolves HJ intermediates. Cleaves cruciform DNA by making single-stranded nicks across the HJ at symmetrical positions within the homologous arms, yielding a 5'-phosphate and a 3'-hydroxyl group; requires a central core of homology in the junction. The consensus cleavage sequence is 5'-(A/T)TT(C/G)-3'. Cleavage occurs on the 3'-side of the TT dinucleotide at the point of strand exchange. HJ branch migration catalyzed by RuvA-RuvB allows RuvC to scan DNA until it finds its consensus sequence, where it cleaves and resolves the cruciform DNA. The sequence is that of Crossover junction endodeoxyribonuclease RuvC from Francisella tularensis subsp. mediasiatica (strain FSC147).